We begin with the raw amino-acid sequence, 494 residues long: Myocyte-specific enhancer factor 2A (494 aa).

Positions 3–57 (RKKIQITRIMDERNRQVTFTKRKFGLMKKAYELSVLCDCEIALIIFNSSNKLFQY) constitute an MADS-box domain. A DNA-binding region (mef2-type) is located at residues 58–86 (ASTDMDKVLLKYTEYNEPHESRTNSDIVE). Position 59 is a phosphoserine; by CK2 (S59). 2 positions are modified to phosphoserine: S98 and S108. A compositionally biased stretch (low complexity) spans 171–181 (TLTDSSMLSPP). Residues 171 to 218 (TLTDSSMLSPPQTTLHRNVSPGAPQRPPSTGNAGGMLSTTDLIVPNGA) form a disordered region. S233 carries the phosphoserine modification. Residues 238-268 (GATGANSLGKVMPTKSPPPPGGGNLGMNSRK) form a disordered region. At K247 the chain carries N6-acetyllysine. S253 carries the phosphoserine modification. The required for interaction with MAPKs stretch occupies residues 264–281 (MNSRKPDLRVVIPPSSKG). A phosphothreonine; by MAPK7 and MAPK14 mark is found at T302 and T309. S345 is subject to Phosphoserine; by MAPK7. Positions 380-392 (SNLSINTNQNINI) are enriched in polar residues. A disordered region spans residues 380–494 (SNLSINTNQN…KRMRMDAWVT (115 aa)). N6-acetyllysine; alternate is present on K393. A Glycyl lysine isopeptide (Lys-Gly) (interchain with G-Cter in SUMO); alternate cross-link involves residue K393. Position 398 is a phosphoserine; by CDK5 (S398). The residue at position 405 (T405) is a Phosphothreonine. A compositionally biased stretch (pro residues) spans 418-432 (QPPPPPPQPQPPQPQ). Residue S440 is modified to Phosphoserine. Low complexity predominate over residues 440 to 453 (SPVDSLSSSSSSYD). 2 stretches are compositionally biased toward basic and acidic residues: residues 454–464 (GSDREDPRGDF) and 475–494 (NTEDRESPSVKRMRMDAWVT).

As to quaternary structure, binds DNA as a homo- or heterodimer. Dimerizes with MEF2D. Interacts with HDAC7. Interacts with PIAS1; the interaction enhances sumoylation. Interacts with HDAC4, HDAC9 and SLC2A4RG. Interacts (via the N-terminal) with MAPK7; the interaction results in the phosphorylation and transcriptional activity of MEF2A. In terms of processing, constitutive phosphorylation on Ser-398 promotes Lys-393 sumoylation thus preventing acetylation at this site. Dephosphorylation on Ser-398 by PPP3CA upon neuron depolarization promotes a switch from sumoylation to acetylation on residue Lys-393 leading to inhibition of dendrite claw differentiation. Phosphorylation on Thr-302 and Thr-309 are the main sites involved in p38 MAPK signaling and activate transcription. Phosphorylated on these sites by MAPK14/p38alpha and MAPK11/p38beta, but not by MAPK13/p38delta nor by MAPK12/p38gamma. Phosphorylation on Ser-398 by CDK5 induced by neurotoxicity inhibits MEF2A transcriptional activation leading to apoptosis of cortical neurons. Phosphorylation on Thr-302, Thr-309 and Ser-345 can be induced by EGF. Sumoylation on Lys-393 is enhanced by PIAS1 and represses transcriptional activity. Phosphorylation on Ser-398 is required for sumoylation. Has no effect on nuclear location nor on DNA binding. Sumoylated with SUMO1 and, to a lesser extent with SUMO2 and SUMO3. PIASx facilitates sumoylation in postsynaptic dendrites in the cerebellar cortex and promotes their morphogenesis. Post-translationally, acetylation on Lys-393 activates transcriptional activity. Acetylated by p300 on several sites in diffentiating myocytes. Acetylation on Lys-4 increases DNA binding and transactivation. Hyperacetylation by p300 leads to enhanced cardiac myocyte growth and heart failure. In terms of processing, proteolytically cleaved in cerebellar granule neurons on several sites by caspase 3 and caspase 7 following neurotoxicity. Preferentially cleaves the CDK5-mediated hyperphosphorylated form which leads to neuron apoptosis and transcriptional inactivation.

It localises to the nucleus. Transcriptional activator which binds specifically to the MEF2 element, 5'-YTA[AT](4)TAR-3', found in numerous muscle-specific genes. Also involved in the activation of numerous growth factor- and stress-induced genes. Mediates cellular functions not only in skeletal and cardiac muscle development, but also in neuronal differentiation and survival. Plays diverse roles in the control of cell growth, survival and apoptosis via p38 MAPK signaling in muscle-specific and/or growth factor-related transcription. In cerebellar granule neurons, phosphorylated and sumoylated MEF2A represses transcription of NUR77 promoting synaptic differentiation. Associates with chromatin to the ZNF16 promoter. The protein is Myocyte-specific enhancer factor 2A (MEF2A) of Pongo abelii (Sumatran orangutan).